The chain runs to 512 residues: Gamma-aminobutyric acid receptor subunit beta-2 (512 aa).

Residues 1–25 (MWRVRKRGYFGIWSFPLIIAAVCAQ) form the signal peptide. The Extracellular segment spans residues 26–241 (SVNDPSNMSL…LSLSFKLKRN (216 aa)). Residues N32 and N104 are each glycosylated (N-linked (GlcNAc...) asparagine). Y121 contacts histamine. An intrachain disulfide couples C160 to C174. N173 is a glycosylation site (N-linked (GlcNAc...) asparagine). Histamine contacts are provided by residues 180–181 (SY) and T226. 4-aminobutanoate is bound by residues Y181 and T226. A helical membrane pass occupies residues 242–262 (IGYFILQTYMPSILITILSWV). Over 263–272 (SFWINYDASA) the chain is Cytoplasmic. The chain crosses the membrane as a helical span at residues 273 to 292 (ARVALGITTVLTMTTINTHL). The Extracellular segment spans residues 293-310 (RETLPKIPYVKAIDMYLM). The chain crosses the membrane as a helical span at residues 311–331 (GCFVFVFMALLEYALVNYIFF). Residues 332 to 490 (GRGPQRQKKA…LTDVNAIDRW (159 aa)) lie on the Cytoplasmic side of the membrane. A Phosphotyrosine modification is found at Y441. A helical transmembrane segment spans residues 491–511 (SRIFFPVVFSFFNIVYWLYYV). Position 512 (N512) is a topological domain, extracellular.

This sequence belongs to the ligand-gated ion channel (TC 1.A.9) family. Gamma-aminobutyric acid receptor (TC 1.A.9.5) subfamily. GABRB2 sub-subfamily. As to quaternary structure, heteropentamer, formed by a combination of alpha (GABRA1-6), beta (GABRB1-3), gamma (GABRG1-3), delta (GABRD), epsilon (GABRE), rho (GABRR1-3), pi (GABRP) and theta (GABRQ) chains, each subunit exhibiting distinct physiological and pharmacological properties. Interacts with UBQLN1. May interact with KIF21B. Identified in a complex of 720 kDa composed of LHFPL4, NLGN2, GABRA1, GABRB2, GABRG2 and GABRB3. As to expression, isoform 1 and isoform 2 show reduced expression in schizophrenic brain. Isoform 3 shows increased expression in schizophrenic and bipolar disorder brains while isoform 4 shows reduced expression.

It is found in the postsynaptic cell membrane. The protein resides in the cell membrane. It localises to the cytoplasmic vesicle membrane. The catalysed reaction is chloride(in) = chloride(out). With respect to regulation, allosterically activated by benzodiazepines. Allosterically activated by the anesthetic etomidate. Inhibited by the antagonist bicuculline. Potentiated by histamine. Functionally, beta subunit of the heteropentameric ligand-gated chloride channel gated by gamma-aminobutyric acid (GABA), a major inhibitory neurotransmitter in the brain. GABA-gated chloride channels, also named GABA(A) receptors (GABAAR), consist of five subunits arranged around a central pore and contain GABA active binding site(s) located at the alpha and beta subunit interface(s). When activated by GABA, GABAARs selectively allow the flow of chloride anions across the cell membrane down their electrochemical gradient. Chloride influx into the postsynaptic neuron following GABAAR opening decreases the neuron ability to generate a new action potential, thereby reducing nerve transmission. GABAARs containing alpha-1 and beta-2 or -3 subunits exhibit synaptogenic activity; the gamma-2 subunit being necessary but not sufficient to induce rapid synaptic contacts formation. Extrasynaptic beta-2 receptors contribute to the tonic GABAergic inhibition. Beta-containing GABAARs can simultaneously bind GABA and histamine where histamine binds at the interface of two neighboring beta subunits, which may be involved in the regulation of sleep and wakefulness. This is Gamma-aminobutyric acid receptor subunit beta-2 from Homo sapiens (Human).